Here is a 326-residue protein sequence, read N- to C-terminus: MTADRWAGRTVLVTGALGFIGSHFVRQLEARGAEVLALYRTERPQLQAELAALDRVRLIRTELRDESDVRGAFKYLAPSIDTVVHCAAMDGNAQFKLERSAEILDSNQRTISHLLNCVRDFGVGEAVVMSSSELYCAPPTAAAHEDDDFRRSMRYTDNGYVLSKTYGEILARLHREQFGTNVFLVRPGNVYGPGDGYDPSRGRVIPSMLAKADAGEEIEIWGDGSQTRSFIHVTDLVRASLRLLETGKYPEMNVAGAEQVSILELARMVMAVLGRPERIRLDPGRPVGAPSRLLDLTRMSEVIDFEPQPLRTGLEETARWFRHHTR.

NADP(+)-binding positions include Gly-15–Gly-21 and Met-129–Ser-132. The active-site Proton donor/acceptor is the Tyr-160. Residues Lys-164 and Pro-187 to Val-190 each bind NADP(+).

Belongs to the NAD(P)-dependent epimerase/dehydratase family.

The enzyme catalyses dTDP-6-deoxy-alpha-D-allose + NAD(+) = dTDP-4-dehydro-6-deoxy-alpha-D-allose + NADH + H(+). The catalysed reaction is dTDP-6-deoxy-alpha-D-allose + NADP(+) = dTDP-4-dehydro-6-deoxy-alpha-D-allose + NADPH + H(+). Functionally, catalyzes the stereospecific reduction of the C-4 keto group of dTDP-4-dehydro-6-deoxy-D-allose, leading to dTDP-6-deoxy-D-allose, an intermediate in the biosynthesis of the mycinose moiety of the chalcomycin antibiotic. This is dTDP-4-dehydro-6-deoxy-D-allose reductase (chmD) from Streptomyces bikiniensis.